The following is a 529-amino-acid chain: Type I restriction enzyme StySPI methylase subunit (529 aa).

S-adenosyl-L-methionine-binding positions include 148–153 (QYFTPR), 178–180 (TAG), and E216. The disordered stretch occupies residues 424 to 443 (AEESEVADSEENKNADQHQA).

It belongs to the N(4)/N(6)-methyltransferase family. In terms of assembly, the type I restriction/modification system is composed of three polypeptides R, M and S; the restriction enzyme has stoichiometry R(2)M(2)S(1) while the methyltransferase is M(2)S(1).

It carries out the reaction a 2'-deoxyadenosine in DNA + S-adenosyl-L-methionine = an N(6)-methyl-2'-deoxyadenosine in DNA + S-adenosyl-L-homocysteine + H(+). Its function is as follows. The subtype gamma methyltransferase (M) subunit of a type I restriction enzyme. The M and S subunits together form a methyltransferase (MTase) that methylates A-2 on the top strand and A-3 on the bottom strand of the sequence 5'-AACN(6)GTRC-3'. In the presence of the R subunit the complex can also act as an endonuclease, binding to the same target sequence but cutting the DNA some distance from this site. Whether the DNA is cut or modified depends on the methylation state of the target sequence. When the target site is unmodified, the DNA is cut. When the target site is hemimethylated, the complex acts as a maintenance MTase modifying the DNA so that both strands become methylated. After locating a non-methylated recognition site, the enzyme complex serves as a molecular motor that translocates DNA in an ATP-dependent manner until a collision occurs that triggers cleavage. This Salmonella potsdam protein is Type I restriction enzyme StySPI methylase subunit.